We begin with the raw amino-acid sequence, 404 residues long: Cytoplasmic tRNA 2-thiolation protein 2 (404 aa).

This sequence belongs to the CTU2/NCS2 family.

It localises to the cytoplasm. The protein operates within tRNA modification; 5-methoxycarbonylmethyl-2-thiouridine-tRNA biosynthesis. In terms of biological role, plays a central role in 2-thiolation of mcm(5)S(2)U at tRNA wobble positions of tRNA(Lys), tRNA(Glu) and tRNA(Gln). May act by forming a heterodimer with NCS6/CTU1 that ligates sulfur from thiocarboxylated URM1 onto the uridine of tRNAs at wobble position. This Drosophila yakuba (Fruit fly) protein is Cytoplasmic tRNA 2-thiolation protein 2.